A 416-amino-acid polypeptide reads, in one-letter code: MKCCRIMFVLLGLWFVFGLSVPGGRTEAASLRANDAPIVLLHGFTGWGREEMFGFKYWGGVRGDIEQWLNDNGYRTYTLAVGPLSSNWDRACEAYAQLVGGTVDYGAAHAAKHGHARFGRTYPGLLPELKRGGRIHIIAHSQGGQTARMLVSLLENGSQEEREYAKAHNVSLSPLFEGGHHFVLSVTTIATPHDGTTLVNMVDFTDRFFDLQKAVLEAAAVASNVPYTSQVYDFKLDQWGLRRQPGESFDHYFERLKRSPVWTSTDTARYDLSVSGAEKLNQWVQASPNTYYLSFSTERTYRGALTGNHYPELGMNAFSAVVCAPFLGSYRNPTLGIDDRWLENDGIVNTVSMNGPKRGSSDRIVPYDGTLKKGVWNDMGTYNVDHLEIIGVDPNPSFDIRAFYLRLAEQLASLRP.

The signal sequence occupies residues Met-1–Ala-28. Residue Ser-141 is the Nucleophile of the active site. Ca(2+) is bound at residue Gly-314. Asp-345 functions as the Charge relay system in the catalytic mechanism. Residue Asp-385 coordinates Ca(2+). Residue His-386 is the Charge relay system of the active site. Residues Glu-388, Asp-393, and Pro-394 each coordinate Ca(2+).

It belongs to the AB hydrolase superfamily. As to quaternary structure, homodimer.

It localises to the secreted. The enzyme catalyses a triacylglycerol + H2O = a diacylglycerol + a fatty acid + H(+). With respect to regulation, activity is inhibited by zinc and iron ions, and activated in vitro in 25% v/v DMSO and acetone. Triacylglycerol hydrolase that shows hydrolysis preference towards some of the natural oils such as olive, sunflower and corn oils. This chain is Lipase, found in Bacillus sp.